Reading from the N-terminus, the 187-residue chain is Major allergen Equ c 1 (187 aa).

The or 16, or 21 signal peptide spans 1–15; sequence MKLLLLCLGLILVCA. N53 and N68 each carry an N-linked (GlcNAc...) asparagine glycan. C83 and C176 are oxidised to a cystine.

Belongs to the calycin superfamily. Lipocalin family. As to quaternary structure, homodimer. Post-translationally, several N-terminal ends may be due to cleavage by signal peptidase at different sites or may be generated by proteolytic processing of the secreted protein. In terms of processing, analysis of the sugar composition shows the presence of GalNAc, Gal, NeuAc, GlcNAc, and Man. May be also O-glycosylated. In terms of tissue distribution, expressed in liver and in sublingual and submaxillary salivary glands. Highly concentrated in secretory fluid such as saliva and urine as well as in hair dandruff extract.

The protein localises to the secreted. The protein is Major allergen Equ c 1 of Equus caballus (Horse).